Consider the following 229-residue polypeptide: Dephospho-CoA kinase domain-containing protein (229 aa).

A DPCK domain is found at 3–207 (LVGLTGGIAS…DCMQFLIIRA (205 aa)). 8-15 (GGIASGKS) contributes to the ATP binding site.

The protein belongs to the CoaE family.

The chain is Dephospho-CoA kinase domain-containing protein (dcakd) from Danio rerio (Zebrafish).